A 134-amino-acid chain; its full sequence is Ribonuclease VapC (134 aa).

Positions 4 to 124 (IVDTSIIIAL…NTKDFKRIPE (121 aa)) constitute a PINc domain. A Mg(2+)-binding site is contributed by Asp-6.

Belongs to the PINc/VapC protein family. Requires Mg(2+) as cofactor.

Its function is as follows. Toxic component of a type II toxin-antitoxin (TA) system. Has ssRNase activity. Its RNase activity is partially neutralized by cognate antitoxin VapB. Rapidly induces apoptosis upon microinjection into mouse fibroblasts (L929 line). Probably contributes to host cell death if bacterial cell lysis occurs during host infection. The protein is Ribonuclease VapC of Rickettsia bellii (strain RML369-C).